We begin with the raw amino-acid sequence, 817 residues long: Leucine--tRNA ligase (817 aa).

The 'HIGH' region motif lies at 42-52; that stretch reads PYPSGRLHMGH. Residues 576 to 580 carry the 'KMSKS' region motif; sequence KMSKS. K579 contributes to the ATP binding site.

Belongs to the class-I aminoacyl-tRNA synthetase family.

It is found in the cytoplasm. It catalyses the reaction tRNA(Leu) + L-leucine + ATP = L-leucyl-tRNA(Leu) + AMP + diphosphate. In Halorhodospira halophila (strain DSM 244 / SL1) (Ectothiorhodospira halophila (strain DSM 244 / SL1)), this protein is Leucine--tRNA ligase.